Reading from the N-terminus, the 632-residue chain is Golgin subfamily A member 8N (632 aa).

The segment at 1–76 (MAEETQHNKL…TSSATLKDLE (76 aa)) is disordered. Residues 38–50 (TNGSIPETATSGG) are compositionally biased toward polar residues. Coiled coils occupy residues 85-150 (VLDS…TDLY) and 209-421 (ELEQ…SLMA). Disordered stretches follow at residues 423–445 (PGEG…PMPS), 505–524 (DAAL…DEGE), and 552–573 (NSAD…ADKH). Positions 508–520 (LGGGHHQAGAQGG) are enriched in gly residues.

It belongs to the GOLGA8 family.

The chain is Golgin subfamily A member 8N from Homo sapiens (Human).